Consider the following 431-residue polypeptide: Histidinol dehydrogenase (431 aa).

NAD(+) contacts are provided by Tyr124, Gln187, and Asn210. Residues Ser236, Gln258, and His261 each coordinate substrate. 2 residues coordinate Zn(2+): Gln258 and His261. Residues Glu325 and His326 each act as proton acceptor in the active site. The substrate site is built by His326, Asp359, Glu413, and His418. Residue Asp359 coordinates Zn(2+). His418 serves as a coordination point for Zn(2+).

The protein belongs to the histidinol dehydrogenase family. It depends on Zn(2+) as a cofactor.

It catalyses the reaction L-histidinol + 2 NAD(+) + H2O = L-histidine + 2 NADH + 3 H(+). It functions in the pathway amino-acid biosynthesis; L-histidine biosynthesis; L-histidine from 5-phospho-alpha-D-ribose 1-diphosphate: step 9/9. In terms of biological role, catalyzes the sequential NAD-dependent oxidations of L-histidinol to L-histidinaldehyde and then to L-histidine. This Legionella pneumophila subsp. pneumophila (strain Philadelphia 1 / ATCC 33152 / DSM 7513) protein is Histidinol dehydrogenase.